A 402-amino-acid chain; its full sequence is Zinc finger protein 322 (402 aa).

The C2H2-type 1; atypical zinc-finger motif lies at 43–65 (YQCLECKQNFCENLALIMCERTH). 8 C2H2-type zinc fingers span residues 71-93 (YKCD…QRIH), 99-121 (YKCS…QRTH), 127-149 (YTCD…QRSH), 155-177 (YLCS…RRTH), 183-205 (FKCL…QRTH), 211-233 (YKCN…KRVH), 239-261 (YKCG…QRVH), and 267-289 (YKCL…QATH). Residues 293 to 315 (FKCLEYEKSFNCSSDLIVHQRIH) form a C2H2-type 10; degenerate zinc finger. A C2H2-type 11; degenerate zinc finger spans residues 351–373 (YKYTVCDKSFHQSSALLQHQTVH). Ser-391 is subject to Phosphoserine.

It belongs to the krueppel C2H2-type zinc-finger protein family. Interacts with POU5F1.

The protein resides in the cytoplasm. It is found in the nucleus. In terms of biological role, transcriptional activator. Important for maintenance of pluripotency in embryonic stem cells. Binds directly to the POU5F1 distal enhancer and the NANOG proximal promoter, and enhances expression of both genes. Can also bind to numerous other gene promoters and regulates expression of many other pluripotency factors, either directly or indirectly. Promotes inhibition of MAPK signaling during embryonic stem cell differentiation. The protein is Zinc finger protein 322 (ZNF322) of Macaca fascicularis (Crab-eating macaque).